The chain runs to 603 residues: Shugoshin (603 aa).

A coiled-coil region spans residues 11–74 (HIQELQNILD…NVQLRSQVSL (64 aa)). Disordered stretches follow at residues 112–164 (ESLP…RSST) and 201–227 (NEID…SNRR). Low complexity-rich tracts occupy residues 146-157 (SVSTGSAHSTSS) and 201-214 (NEID…DNLL). The span at 218–227 (PHKKRKSNRR) shows a compositional bias: basic residues. The stretch at 304 to 325 (KQDILDETEKRDTAVNQKKKLE) forms a coiled coil. The tract at residues 331 to 399 (PVEELSSSKN…ESVDFDRPRR (69 aa)) is disordered. The segment covering 362–376 (KVKHSMKSRKPKKNK) has biased composition (basic residues). A coiled-coil region spans residues 431–451 (NIQDLQVKYKKSKKVLEKELK). Basic and acidic residues predominate over residues 455 to 467 (KAMKSPKKNEKTF). Disordered regions lie at residues 455 to 519 (KAMK…HSSF) and 583 to 603 (HNDT…KNKA). Residues 483–512 (RPSSTHSTSSVDAECSHNNSHSENINSSIN) show a composition bias toward low complexity. A compositionally biased stretch (polar residues) spans 583 to 593 (HNDTNKSSPKT). Positions 594–603 (YRSRSRKNKA) are enriched in basic residues.

It belongs to the shugoshin family.

The protein localises to the nucleus. Its subcellular location is the chromosome. It is found in the centromere. In terms of biological role, plays a central role in chromosome cohesion during cell division by preventing premature dissociation of cohesin complex from centromeres after prophase, when most of cohesin complex dissociates from chromosomes arms. This is Shugoshin (SGO1) from Candida glabrata (strain ATCC 2001 / BCRC 20586 / JCM 3761 / NBRC 0622 / NRRL Y-65 / CBS 138) (Yeast).